The primary structure comprises 88 residues: Antitoxin HipB (88 aa).

The 55-residue stretch at 17–71 folds into the HTH cro/C1-type domain; that stretch reads MKLVRQQNGWTQSELAKKIGIKQATISNFENNPDNTTLTTFFKILQSLELSMTLC. Residues 21-47 constitute a DNA-binding region (H-T-H motif); the sequence is RQQNGWTQSELAKKIGIKQATISNFEN.

Homodimer. Binds operator DNA sites in the absence of HipA, inducing a 70 degree bend in consecutive operators and deforming DNA between the operators so that HipB dimers bind on opposite faces of the DNA. Forms a HipA(2)HipB(2) heterotetramer which can interact with a single operator site on DNA, inducing a 70 degree bend. When 2 operators are present each HipB dimer contacts 1 HipA molecule, which are brought together by the DNA bend and dimerize, blocking the HipA active site and inactivating its toxic activity. HipA-HipB-induced bending also distorts the -35 and -10 boxes of the promoter and probably prevents sigma-factor binding, and additionally bound HipB and HipA block RNA polymerase access to the -35 box, thus repressing the operon. This complex also blocks the toxic activity of HipA. Mutations present in allele hipA7 (G22S and D291A) decrease the affinity of HipA for HipB. Degraded by Lon protease in vivo; half-life is 17 minutes in wild-type cells and over 200 minutes in a lon deletion strain. In vitro degradation by Lon is Mg(2+)-ATP-dependent.

With respect to regulation, degraded by Lon protease; degradation is inhibited in a HipA-HipB complex and when bound to the operator consensus sequence dsDNA. Antitoxin component of a type II toxin-antitoxin (TA) system. Neutralizes the toxic effect of cognate toxin HipA. Also neutralizes the toxic effect of non-cognate toxin YjjJ. Binds to operator sites with the consensus sequence 5-'TATCCN(8)GGATA-3' to repress the hipBA operon promoter; binding of HipB(2) to DNA induces a 70 degree bend. This forces HipA dimerization, which blocks HipA's active site and thus its toxic action. May play a role in biofilm formation. The sequence is that of Antitoxin HipB (hipB) from Escherichia coli (strain K12).